A 431-amino-acid chain; its full sequence is Glutamyl-tRNA(Gln) amidotransferase subunit A (431 aa).

Catalysis depends on charge relay system residues Lys55 and Ser130. Ser154 (acyl-ester intermediate) is an active-site residue.

The protein belongs to the amidase family. GatA subfamily. Heterotrimer of A, B and C subunits.

It carries out the reaction L-glutamyl-tRNA(Gln) + L-glutamine + ATP + H2O = L-glutaminyl-tRNA(Gln) + L-glutamate + ADP + phosphate + H(+). In terms of biological role, allows the formation of correctly charged Gln-tRNA(Gln) through the transamidation of misacylated Glu-tRNA(Gln) in organisms which lack glutaminyl-tRNA synthetase. The reaction takes place in the presence of glutamine and ATP through an activated gamma-phospho-Glu-tRNA(Gln). In Methanococcus maripaludis (strain DSM 14266 / JCM 13030 / NBRC 101832 / S2 / LL), this protein is Glutamyl-tRNA(Gln) amidotransferase subunit A.